The primary structure comprises 1047 residues: MAPRLQLEKAAWRWAEAVRPEDITHEHIELAYRIAVSACKRGACRRNCKGNPNCLVGIGEQSWLGEIDENTFHNIDDPNSERRDKNTFVGLTNLGATCYVNTFLQVWFHNLELRRALYRFQNSRAEGHNTDSDYEPRTICEHLQYLFALLQNSNRRYIDPSGLVKALGLDTGQQQDAQEFSKLFLSLLEDTLSKQKDPNLQNVIQQQFCGQFSYVTVCNKCGRESPLPSRFYELELNIQGHKNLTECVTEFLKEEKLDGDNRYYCESCQSKQNATRRIKLQSLPRTLNFQLMRFVFDRQSGHKKKLNTFISFPEVLDMEPFLEGREEKCTYELSAVLIHRGVSAYSGHYIAHVRDAHTNDWYKFNDEEIEKMEGKKLQLGIEEDIAETAKSQTRKPKCSKGYHCSRNAYMLVYKQQTEEINQTESPVDVPAFLQKLVEQDNRKFEEWCSEMSDMRKQSVDKGKAKHEEVKELYELLPAEDGQSYEFVPLEWLKKWLDDSTAIKEIDNSQFLCTHGKLHPDKIGEAKRISLKAADLLFSRYGGGPRLDRSSLCRDCVTQRCRVIRLKNQLNEDYREVTNLAKSALKSEESGFWIGKASLRSWRQLALDQLEEDEEETKHNNSKINGEKSSPGTKADGVKGDSEDGDGEEMKNFNEDILCYHGGLSILENDRRLVSAEVWNKLRMYFPKAPEFTQDHDPCQQCMRLEREGKENEALNRMMANEQKSSLLNLFQEKNRPTLQKWPQDTDILYIVPLYFVEEWKKFIRRPAKGNPVSNVGNSILLCPHGGFMFTYDSMLQGDAQHIALLWPAEWEVISKMFLVDQVISICRIHDKTQDNGNVQYQTHPDLCRECREGFIFQQQRDMREYTQATVYVRKVIDKKRMIKESAPEFSVSGSDVEDEKEEPKLDGEKDPDFSQTEGGAKRQKLNDTVSLPTAVVTTTSKSGIRRSTRHRKLRGEKALIVSANQTLKDLKIQIMHAFSVAPFDQNLSIDGRCLKDDSATLGSLGVIPESIICLKADEPIADYAAMDDVYQVCMPEEGFKGTGLLGH.

The region spanning 89-416 (VGLTNLGATC…NAYMLVYKQQ (328 aa)) is the USP domain. The active-site Nucleophile is Cys-98. Residue His-348 is the Proton acceptor of the active site. DUSP domains lie at 457–551 (QSVD…RSSL), 567–697 (NQLN…DHDP), and 717–830 (MMAN…RIHD). Residues 609–647 (LEEDEEETKHNNSKINGEKSSPGTKADGVKGDSEDGDGE) form a disordered region. Residues 621–631 (SKINGEKSSPG) show a composition bias toward polar residues. A compositionally biased stretch (basic and acidic residues) spans 635–647 (DGVKGDSEDGDGE). Residues 887–928 (PEFSVSGSDVEDEKEEPKLDGEKDPDFSQTEGGAKRQKLNDT) form a disordered region. Residues 901–912 (EEPKLDGEKDPD) show a composition bias toward basic and acidic residues. Residues 961–1012 (VSANQTLKDLKIQIMHAFSVAPFDQNLSIDGRCLKDDSATLGSLGVIPESII) enclose the Ubiquitin-like domain.

The protein belongs to the peptidase C19 family.

Its subcellular location is the cytoplasm. The protein resides in the nucleus. The enzyme catalyses Thiol-dependent hydrolysis of ester, thioester, amide, peptide and isopeptide bonds formed by the C-terminal Gly of ubiquitin (a 76-residue protein attached to proteins as an intracellular targeting signal).. Its function is as follows. Recognizes and hydrolyzes the peptide bond at the C-terminal Gly of ubiquitin. Involved in the processing of poly-ubiquitin precursors as well as that of ubiquitinated proteins. This chain is Ubiquitin carboxyl-terminal hydrolase 48 (usp48), found in Danio rerio (Zebrafish).